Here is a 379-residue protein sequence, read N- to C-terminus: Cytochrome b (379 aa).

The next 4 membrane-spanning stretches (helical) occupy residues 33–53, 77–98, 113–133, and 178–198; these read FGSLLGVCLMIQILTGLFLAM, WLIRYLHANGASMFFICLFIHV, WNIGIILFLTTMATAFVGYVL, and FFAFHFILPFIITAFVLVHLL. Heme b contacts are provided by histidine 83 and histidine 97. Heme b contacts are provided by histidine 182 and histidine 196. Position 201 (histidine 201) interacts with a ubiquinone. 4 helical membrane passes run 226-246, 288-308, 320-340, and 347-367; these read IKDLLGILFLLMALMILALFF, LGGVLALLLSIIILAAFPLLN, VTQTIYWIFIANLLVLTWIGG, and FTMIGQIASVIYFATIIVLMP.

The protein belongs to the cytochrome b family. The cytochrome bc1 complex contains 11 subunits: 3 respiratory subunits (MT-CYB, CYC1 and UQCRFS1), 2 core proteins (UQCRC1 and UQCRC2) and 6 low-molecular weight proteins (UQCRH/QCR6, UQCRB/QCR7, UQCRQ/QCR8, UQCR10/QCR9, UQCR11/QCR10 and a cleavage product of UQCRFS1). This cytochrome bc1 complex then forms a dimer. It depends on heme b as a cofactor.

It is found in the mitochondrion inner membrane. Component of the ubiquinol-cytochrome c reductase complex (complex III or cytochrome b-c1 complex) that is part of the mitochondrial respiratory chain. The b-c1 complex mediates electron transfer from ubiquinol to cytochrome c. Contributes to the generation of a proton gradient across the mitochondrial membrane that is then used for ATP synthesis. In Akodon iniscatus (Intelligent grass mouse), this protein is Cytochrome b (MT-CYB).